A 189-amino-acid chain; its full sequence is Xanthine phosphoribosyltransferase (189 aa).

Xanthine is bound by residues leucine 20 and asparagine 27. Residue 128–132 (ANGEA) coordinates 5-phospho-alpha-D-ribose 1-diphosphate. A xanthine-binding site is contributed by lysine 156.

The protein belongs to the purine/pyrimidine phosphoribosyltransferase family. Xpt subfamily. In terms of assembly, homodimer.

Its subcellular location is the cytoplasm. It carries out the reaction XMP + diphosphate = xanthine + 5-phospho-alpha-D-ribose 1-diphosphate. It functions in the pathway purine metabolism; XMP biosynthesis via salvage pathway; XMP from xanthine: step 1/1. Converts the preformed base xanthine, a product of nucleic acid breakdown, to xanthosine 5'-monophosphate (XMP), so it can be reused for RNA or DNA synthesis. The protein is Xanthine phosphoribosyltransferase of Clostridium acetobutylicum (strain ATCC 824 / DSM 792 / JCM 1419 / IAM 19013 / LMG 5710 / NBRC 13948 / NRRL B-527 / VKM B-1787 / 2291 / W).